The chain runs to 305 residues: Oxygen-dependent coproporphyrinogen-III oxidase (305 aa).

A substrate-binding site is contributed by serine 93. A divalent metal cation contacts are provided by histidine 97 and histidine 107. The Proton donor role is filled by histidine 107. A substrate-binding site is contributed by 109–111 (NVR). Residues histidine 146 and histidine 176 each contribute to the a divalent metal cation site. Positions 241–276 (YVEFNLVYDRGTLFGLQSGGRTESILMSLPPQVRWG) are important for dimerization. 259–261 (GGR) serves as a coordination point for substrate.

It belongs to the aerobic coproporphyrinogen-III oxidase family. Homodimer. It depends on a divalent metal cation as a cofactor.

It is found in the cytoplasm. The catalysed reaction is coproporphyrinogen III + O2 + 2 H(+) = protoporphyrinogen IX + 2 CO2 + 2 H2O. It functions in the pathway porphyrin-containing compound metabolism; protoporphyrin-IX biosynthesis; protoporphyrinogen-IX from coproporphyrinogen-III (O2 route): step 1/1. In terms of biological role, involved in the heme biosynthesis. Catalyzes the aerobic oxidative decarboxylation of propionate groups of rings A and B of coproporphyrinogen-III to yield the vinyl groups in protoporphyrinogen-IX. This Pseudomonas fluorescens (strain ATCC BAA-477 / NRRL B-23932 / Pf-5) protein is Oxygen-dependent coproporphyrinogen-III oxidase.